We begin with the raw amino-acid sequence, 137 residues long: uncharacterized protein (137 aa).

This sequence belongs to the ycf72 family.

The protein resides in the plastid. It localises to the chloroplast. This is an uncharacterized protein from Saccharum hybrid (Sugarcane).